Here is a 432-residue protein sequence, read N- to C-terminus: Cyclic 2,3-diphosphoglycerate synthetase (432 aa).

The protein belongs to the cyclic 2,3-diphosphoglycerate synthetase family.

Its subcellular location is the cytoplasm. The catalysed reaction is (2R)-2,3-bisphosphoglycerate + ATP + H(+) = cyclic (2R)-2,3-bisphosphoglycerate + ADP + phosphate. Catalyzes the formation of cyclic 2,3-diphosphoglycerate (cDPG) by formation of an intramolecular phosphoanhydride bond at the expense of ATP. This chain is Cyclic 2,3-diphosphoglycerate synthetase, found in Thermococcus onnurineus (strain NA1).